The following is a 66-amino-acid chain: Small ribosomal subunit protein eS30 (66 aa).

The segment at 1-35 is disordered; it reads MGKVHGGLNRAGKVRNATPKKDKEEKRKPKVGRAK.

The protein belongs to the eukaryotic ribosomal protein eS30 family.

This chain is Small ribosomal subunit protein eS30 (rps30-1), found in Dictyostelium discoideum (Social amoeba).